A 212-amino-acid chain; its full sequence is Probable chemoreceptor glutamine deamidase CheD (212 aa).

The protein belongs to the CheD family.

It carries out the reaction L-glutaminyl-[protein] + H2O = L-glutamyl-[protein] + NH4(+). Its function is as follows. Probably deamidates glutamine residues to glutamate on methyl-accepting chemotaxis receptors (MCPs), playing an important role in chemotaxis. The sequence is that of Probable chemoreceptor glutamine deamidase CheD from Oleidesulfovibrio alaskensis (strain ATCC BAA-1058 / DSM 17464 / G20) (Desulfovibrio alaskensis).